Here is a 153-residue protein sequence, read N- to C-terminus: Endoribonuclease YbeY (153 aa).

3 residues coordinate Zn(2+): histidine 113, histidine 117, and histidine 123.

Belongs to the endoribonuclease YbeY family. Requires Zn(2+) as cofactor.

It is found in the cytoplasm. In terms of biological role, single strand-specific metallo-endoribonuclease involved in late-stage 70S ribosome quality control and in maturation of the 3' terminus of the 16S rRNA. The polypeptide is Endoribonuclease YbeY (Aliivibrio salmonicida (strain LFI1238) (Vibrio salmonicida (strain LFI1238))).